Here is a 310-residue protein sequence, read N- to C-terminus: Methionyl-tRNA formyltransferase (310 aa).

Position 111-114 (111-114) interacts with (6S)-5,6,7,8-tetrahydrofolate; the sequence is SLLP.

It belongs to the Fmt family.

The catalysed reaction is L-methionyl-tRNA(fMet) + (6R)-10-formyltetrahydrofolate = N-formyl-L-methionyl-tRNA(fMet) + (6S)-5,6,7,8-tetrahydrofolate + H(+). Functionally, attaches a formyl group to the free amino group of methionyl-tRNA(fMet). The formyl group appears to play a dual role in the initiator identity of N-formylmethionyl-tRNA by promoting its recognition by IF2 and preventing the misappropriation of this tRNA by the elongation apparatus. The protein is Methionyl-tRNA formyltransferase of Rhodopseudomonas palustris (strain BisB18).